Consider the following 366-residue polypeptide: Alanine racemase (366 aa).

Lys-35 serves as the catalytic Proton acceptor; specific for D-alanine. N6-(pyridoxal phosphate)lysine is present on Lys-35. Arg-130 contributes to the substrate binding site. Tyr-254 serves as the catalytic Proton acceptor; specific for L-alanine. A substrate-binding site is contributed by Met-302.

The protein belongs to the alanine racemase family. Requires pyridoxal 5'-phosphate as cofactor.

The enzyme catalyses L-alanine = D-alanine. Its pathway is amino-acid biosynthesis; D-alanine biosynthesis; D-alanine from L-alanine: step 1/1. In terms of biological role, catalyzes the interconversion of L-alanine and D-alanine. May also act on other amino acids. The protein is Alanine racemase (alr) of Variovorax paradoxus (strain S110).